We begin with the raw amino-acid sequence, 268 residues long: MEFAHLTVLSLFCLAFVGITATSPREDYWQSIWPNTPLPKTFSDMLIPSGKTNSLPIKSEELKQYSTLFFEHDLHPRKNFILGNTNSVGSIIRPFTKSRQGVTDSIWLANKEKQSLEDFCYSPTAIAEHKHCVSSLKSMIDQVISHFGSTKIKAISSNFAPYQDQYVVEDVKKVGDNAVMCHRLNFEKVVFNCHQVRDTTAYVVSLVASDGTKTKALTVCHHDTRGMNPELLYEALEVTLGTVPVCHFIGNKAAAWVPNHTADNLCVM.

Positions 1-22 (MEFAHLTVLSLFCLAFVGITAT) are cleaved as a signal peptide. Tandem repeats lie at residues 50 to 55 (GKTNSL), 83 to 88 (GNTNSV), 101 to 106 (GVTDSI), 166 to 183 (YVVE…MCHR), and 202 to 222 (YVVS…VCHH). The tract at residues 50–106 (GKTNSLPIKSEELKQYSTLFFEHDLHPRKNFILGNTNSVGSIIRPFTKSRQGVTDSI) is 3 X 6 AA approximate repeats. Residues 68 to 259 (LFFEHDLHPR…GNKAAAWVPN (192 aa)) form the BURP domain. Residues 166 to 222 (YVVEDVKKVGDNAVMCHRLNFEKVVFNCHQVRDTTAYVVSLVASDGTKTKALTVCHH) form a 2 X approximate repeats region. An N-linked (GlcNAc...) asparagine glycan is attached at N259.

Seed.

This Vicia faba (Broad bean) protein is Embryonic abundant protein USP87.